The following is an 846-amino-acid chain: Neurotactin (846 aa).

Positions M1–R222 are disordered. The Cytoplasmic portion of the chain corresponds to M1–D324. Residues P11–E20 are compositionally biased toward low complexity. Over residues E23–T42 the composition is skewed to basic and acidic residues. At T28 the chain carries Phosphothreonine; by PKC. T42 is subject to Phosphothreonine. S44 bears the Phosphoserine mark. T47 is subject to Phosphothreonine. Phosphoserine occurs at positions 48 and 52. A compositionally biased stretch (basic and acidic residues) spans A63–K74. S75 carries the post-translational modification Phosphoserine; by PKC. Position 77 is a phosphoserine (S77). Composition is skewed to basic and acidic residues over residues D95–P111, L141–N155, G163–R178, and P185–A205. S103 is subject to Phosphoserine; by PKC. Position 169 is a phosphoserine; by PKC (S169). Phosphoserine occurs at positions 186 and 203. At T206 the chain carries Phosphothreonine. A Phosphoserine modification is found at S256. At T259 the chain carries Phosphothreonine. S263 is modified (phosphoserine). At T269 the chain carries Phosphothreonine. The helical; Signal-anchor for type II membrane protein transmembrane segment at A325–T346 threads the bilayer. The Extracellular portion of the chain corresponds to H347–D846. Residues N410, N417, and N428 are each glycosylated (N-linked (GlcNAc...) asparagine). 2 cysteine pairs are disulfide-bonded: C422–C437 and C600–C605. N-linked (GlcNAc...) asparagine glycosylation is found at N636, N691, and N720. C738 and C830 form a disulfide bridge.

This sequence in the C-terminal section; belongs to the type-B carboxylesterase/lipase family. As to expression, late in embryogenesis, expression is restricted to cells of the peripheral and central nervous system undergoing proliferation and differentiation. Also expressed in larval CNS, mesoderm and imaginal disks.

The protein localises to the membrane. May mediate or modulate cell adhesion between embryonic cells during development. The protein is Neurotactin (Nrt) of Drosophila melanogaster (Fruit fly).